A 49-amino-acid chain; its full sequence is Large ribosomal subunit protein bL33 (49 aa).

This sequence belongs to the bacterial ribosomal protein bL33 family.

The polypeptide is Large ribosomal subunit protein bL33 (Moorella thermoacetica (strain ATCC 39073 / JCM 9320)).